The following is a 621-amino-acid chain: 1-deoxy-D-xylulose-5-phosphate synthase (621 aa).

Residues His-80 and 121–123 (GHS) each bind thiamine diphosphate. Residue Asp-152 participates in Mg(2+) binding. Residues 153 to 154 (GA), Asn-181, Tyr-288, and Glu-370 contribute to the thiamine diphosphate site. Asn-181 lines the Mg(2+) pocket.

Belongs to the transketolase family. DXPS subfamily. As to quaternary structure, homodimer. It depends on Mg(2+) as a cofactor. Thiamine diphosphate is required as a cofactor.

The enzyme catalyses D-glyceraldehyde 3-phosphate + pyruvate + H(+) = 1-deoxy-D-xylulose 5-phosphate + CO2. The protein operates within metabolic intermediate biosynthesis; 1-deoxy-D-xylulose 5-phosphate biosynthesis; 1-deoxy-D-xylulose 5-phosphate from D-glyceraldehyde 3-phosphate and pyruvate: step 1/1. Its function is as follows. Catalyzes the acyloin condensation reaction between C atoms 2 and 3 of pyruvate and glyceraldehyde 3-phosphate to yield 1-deoxy-D-xylulose-5-phosphate (DXP). The sequence is that of 1-deoxy-D-xylulose-5-phosphate synthase from Edwardsiella ictaluri (strain 93-146).